Reading from the N-terminus, the 401-residue chain is Golgi membrane protein 1 (401 aa).

Position 1 is an N-acetylmethionine (M1). Residues 1–12 (MMGLGNGRRSMK) lie on the Cytoplasmic side of the membrane. The chain crosses the membrane as a helical; Signal-anchor for type II membrane protein span at residues 13-35 (SPPLVLAALVACIIVLGFNYWIA). At 36–401 (SSRSVDLQTR…DQREKRNHTL (366 aa)) the chain is on the lumenal side. Positions 40–205 (VDLQTRIMEL…QRQQLQALSE (166 aa)) form a coiled coil. N109 carries N-linked (GlcNAc...) (complex) asparagine glycosylation. N144 carries an N-linked (GlcNAc...) asparagine glycan. The segment at 178–401 (TKKGNEAVAS…DQREKRNHTL (224 aa)) is disordered. Position 187 is a phosphoserine (S187). Polar residues predominate over residues 228–238 (LGNSKSQTPAP). 2 stretches are compositionally biased toward basic and acidic residues: residues 244-255 (LDSKRQVEKEET) and 264-285 (EPQRDRLPQEPGREQVVEDRPV). Residues 286 to 295 (GGRGFGGAGE) are compositionally biased toward gly residues. Residues 298 to 312 (QTPQVQAALSVSQEN) are compositionally biased toward polar residues. S309 is subject to Phosphoserine; by FAM20C. Residues 350-360 (DYNMDENEAES) are compositionally biased toward acidic residues. Basic and acidic residues predominate over residues 381-395 (EDQKRDTINLLDQRE). A glycan (N-linked (GlcNAc...) asparagine) is linked at N398.

This sequence belongs to the GOLM family. In terms of assembly, interacts with DYM. In terms of processing, glycosylated. Post-translationally, phosphorylation sites are present in the extracellular medium. Widely expressed. Highly expressed in colon, prostate, trachea and stomach. Expressed at lower level in testis, muscle, lymphoid tissues, white blood cells and spleen. Predominantly expressed by cells of the epithelial lineage. Expressed at low level in normal liver. Expression significantly increases in virus (HBV, HCV) infected liver. Expression does not increase in liver disease due to non-viral causes (alcohol-induced liver disease, autoimmune hepatitis). Increased expression in hepatocytes appears to be a general feature of advanced liver disease. In liver tissue from patients with adult giant-cell hepatitis (GCH), it is strongly expressed in hepatocytes-derived syncytial giant cells. Constitutively expressed by biliary epithelial cells but not by hepatocytes.

Its subcellular location is the golgi apparatus. It localises to the cis-Golgi network membrane. In terms of biological role, unknown. Cellular response protein to viral infection. This Homo sapiens (Human) protein is Golgi membrane protein 1 (GOLM1).